An 80-amino-acid chain; its full sequence is Diphthamide biosynthesis protein 3 (80 aa).

The DPH-type MB domain occupies 4–60 (FHDEVEIEDFEFDEEKDVYHYPCPCGDRFEIPREMLEMGEDVAQCPSCSLLIRVIYD). The Fe cation site is built by C26, C28, C48, and C51.

Belongs to the DPH3 family. As to quaternary structure, component of the 2-(3-amino-3-carboxypropyl)histidine synthase complex composed of dph-1, dph-2, dph-3 and a NADH-dependent reductase. Fe(2+) serves as cofactor.

The enzyme catalyses [3Fe-4S](1+)-[protein] + Fe(2+)-[Dph3] = [3Fe-4S](0)-[protein] + Fe(3+)-[Dph3]. It carries out the reaction 2 [3Fe-4S](0)-[protein] + 2 Fe(2+)-[Dph3] + NADH = 2 [4Fe-4S](1+)-[protein] + 2 [Dph3] + NAD(+) + H(+). The protein operates within protein modification; peptidyl-diphthamide biosynthesis. Functionally, required for the first step of diphthamide biosynthesis, a post-translational modification of histidine which occurs in elongation factor 2. Dph-1 and dph-2 transfer a 3-amino-3-carboxypropyl (ACP) group from S-adenosyl-L-methionine (SAM) to a histidine residue, the reaction is assisted by a reduction system comprising dph-3 and a NADH-dependent reductase. Acts as an electron donor to reduce the Fe-S cluster in dph1-dph2 keeping the [4Fe-4S] clusters in the active and reduced state. Restores iron to dph-1-dph-2 iron-sulfur clusters which have degraded from [4Fe-4S] to [3Fe-4S] by donating an iron atom to reform [4Fe-4S] clusters, in a manner dependent on the presence of elongation factor 2 and SAM. Associates with the elongator complex and is required for tRNA Wobble base modifications mediated by the elongator complex. The elongator complex is required for multiple tRNA modifications, including mcm5U (5-methoxycarbonylmethyl uridine), mcm5s 2U (5-methoxycarbonylmethyl-2-thiouridine), and ncm5U (5-carbamoylmethyl uridine). The sequence is that of Diphthamide biosynthesis protein 3 from Caenorhabditis elegans.